A 247-amino-acid chain; its full sequence is Adenosylcobinamide-GDP ribazoletransferase (247 aa).

The next 5 membrane-spanning stretches (helical) occupy residues 1 to 21 (MLRLYFVALQFLAIIPIPFSF), 37 to 57 (LVGLTLGLLLAGCDYLLALAL), 61 to 81 (VADLLLVAILALVTGALHLDG), 109 to 129 (AVGVVGLVLALLLKYQALFAV), and 176 to 196 (VAVAAFFTVVTGWLLLGLPGI).

The protein belongs to the CobS family. The cofactor is Mg(2+).

It localises to the cell inner membrane. The catalysed reaction is alpha-ribazole + adenosylcob(III)inamide-GDP = adenosylcob(III)alamin + GMP + H(+). The enzyme catalyses alpha-ribazole 5'-phosphate + adenosylcob(III)inamide-GDP = adenosylcob(III)alamin 5'-phosphate + GMP + H(+). It functions in the pathway cofactor biosynthesis; adenosylcobalamin biosynthesis; adenosylcobalamin from cob(II)yrinate a,c-diamide: step 7/7. Its function is as follows. Joins adenosylcobinamide-GDP and alpha-ribazole to generate adenosylcobalamin (Ado-cobalamin). Also synthesizes adenosylcobalamin 5'-phosphate from adenosylcobinamide-GDP and alpha-ribazole 5'-phosphate. This is Adenosylcobinamide-GDP ribazoletransferase from Geotalea daltonii (strain DSM 22248 / JCM 15807 / FRC-32) (Geobacter daltonii).